The following is a 139-amino-acid chain: 3-hydroxyacyl-[acyl-carrier-protein] dehydratase FabZ (139 aa).

H46 is an active-site residue.

This sequence belongs to the thioester dehydratase family. FabZ subfamily.

It localises to the cytoplasm. It catalyses the reaction a (3R)-hydroxyacyl-[ACP] = a (2E)-enoyl-[ACP] + H2O. Its function is as follows. Involved in unsaturated fatty acids biosynthesis. Catalyzes the dehydration of short chain beta-hydroxyacyl-ACPs and long chain saturated and unsaturated beta-hydroxyacyl-ACPs. This is 3-hydroxyacyl-[acyl-carrier-protein] dehydratase FabZ from Streptococcus pyogenes serotype M1.